A 453-amino-acid chain; its full sequence is Plasmepsin II (453 aa).

The Cytoplasmic segment spans residues 1 to 37 (MDITVREHDFKHGFIKSNSTFDGLNIDNSKNKKKIQK). A propeptide spanning residues 1–124 (MDITVREHDF…SGLTKTNYLG (124 aa)) is cleaved from the precursor. The helical; Signal-anchor for type II membrane protein transmembrane segment at 38–58 (GFQILYVLLFCSVMCGLFYYV) threads the bilayer. Over 59–453 (YENVWLQRDN…VGIALAKKNL (395 aa)) the chain is Lumenal. One can recognise a Peptidase A1 domain in the interval 140-447 (FYGDAEVGDN…DYDNQSVGIA (308 aa)). Aspartate 158 is an active-site residue. An intrachain disulfide couples cysteine 171 to cysteine 176. The active site involves aspartate 338. Residues cysteine 373 and cysteine 409 are joined by a disulfide bond.

It belongs to the peptidase A1 family. In terms of assembly, component of the hemozoin formation complex (HFC) composed of falcipains FP2A and/or FP2B, plasmepsins PMII, PMIII/HAP and PMIV, heme detoxifying protein HDP and falcilysin FLN. The HFC complex is involved in hemoglobin degradation and detoxification of heme in the food vacuole during the asexual blood stage. Post-translationally, not N-glycosylated. Proteolytically cleaved into the soluble active mature form in the digestive vacuole by cysteine protease falcipains; the process begins at the early ring stage. Proteolysis requires an acidic environment. In absence of falcipains, autoprocessing may serve as an alternate activation system.

The protein localises to the membrane. Its subcellular location is the vacuole lumen. It localises to the vacuole membrane. It carries out the reaction Hydrolysis of the bonds linking certain hydrophobic residues in hemoglobin or globin. Also cleaves small molecules substrates such as Ala-Leu-Glu-Arg-Thr-Phe-|-Phe(NO2)-Ser-Phe-Pro-Thr.. With respect to regulation, inhibited by pepstatin A. Inhibited by KNI derived compounds (KNI-10742, 10743, 10395, 10333, and 10343). During the asexual blood stage, participates in initial cleavage of native host hemoglobin (Hb) resulting in Hb denaturation. May cleave preferentially denatured hemoglobin that has been cleaved by PMI. Digestion of host Hb is an essential step which provides the parasite with amino acids for protein synthesis, and regulates osmolarity. The chain is Plasmepsin II from Plasmodium falciparum (isolate 3D7).